Consider the following 383-residue polypeptide: Histidinol-phosphate aminotransferase (383 aa).

K240 carries the post-translational modification N6-(pyridoxal phosphate)lysine.

It belongs to the class-II pyridoxal-phosphate-dependent aminotransferase family. Histidinol-phosphate aminotransferase subfamily. In terms of assembly, homodimer. Requires pyridoxal 5'-phosphate as cofactor.

The catalysed reaction is L-histidinol phosphate + 2-oxoglutarate = 3-(imidazol-4-yl)-2-oxopropyl phosphate + L-glutamate. It participates in amino-acid biosynthesis; L-histidine biosynthesis; L-histidine from 5-phospho-alpha-D-ribose 1-diphosphate: step 7/9. This is Histidinol-phosphate aminotransferase from Oleidesulfovibrio alaskensis (strain ATCC BAA-1058 / DSM 17464 / G20) (Desulfovibrio alaskensis).